A 177-amino-acid chain; its full sequence is Inner membrane-spanning protein YciB (177 aa).

The next 5 membrane-spanning stretches (helical) occupy residues 22-42, 50-70, 76-96, 121-141, and 149-169; these read IFIA…IHWI, ISLF…FFHN, WKIT…QFFT, FIWS…AYYF, and FKVF…SIYI.

Belongs to the YciB family.

The protein localises to the cell inner membrane. Plays a role in cell envelope biogenesis, maintenance of cell envelope integrity and membrane homeostasis. The protein is Inner membrane-spanning protein YciB of Buchnera aphidicola subsp. Acyrthosiphon pisum (strain 5A).